The following is a 126-amino-acid chain: Protein ApaG (126 aa).

The ApaG domain maps to 2–126; sequence SALDDSIRVE…FRLALPGLLH (125 aa).

The chain is Protein ApaG from Shewanella sp. (strain MR-4).